Reading from the N-terminus, the 526-residue chain is PTS system alpha-glucoside-specific EIICB component (526 aa).

A PTS EIIC type-1 domain is found at 1 to 417 (MLKHFQRLGG…YNVKTSGRED (417 aa)). 12 helical membrane passes run 12–32 (LFAPVLLFPFAGLVVALTIIL), 59–79 (GWTVFRQLPLIFAIGLPIGLA), 88–108 (LAVLATYLTYNYFISAILTFW), 132–152 (IKTLDTSIVGAIVISGITIYI), 173–193 (LVSAIAFVVMIPCAYITCLVW), 200–220 (ISSLQALMVTSGTFGVWLYTF), 224–244 (ILIPTGLHHFIYGPFIFGPAV), 274–294 (GGFALHGNSKIFGCIGIALAM), 305–325 (IVSGLLIPAALTAALVGITEP), 330–350 (FLFIAPFLFVVHAVLAATMAA), 355–375 (FGVVKYGSGIIEIAALNWLPL), and 381–401 (GVMFTQLAIGVVFIGIHYLVF). Residues 447 to 526 (SGKAKAFLEA…ESFENLMEQN (80 aa)) form the PTS EIIB type-1 domain. Cys-469 serves as the catalytic Phosphocysteine intermediate; for EIIB activity.

Its subcellular location is the cell membrane. The phosphoenolpyruvate-dependent sugar phosphotransferase system (sugar PTS), a major carbohydrate active -transport system, catalyzes the phosphorylation of incoming sugar substrates concomitantly with their translocation across the cell membrane. This system is involved in alpha-glucoside transport. The chain is PTS system alpha-glucoside-specific EIICB component (malB) from Fusobacterium mortiferum.